An 887-amino-acid polypeptide reads, in one-letter code: Alanine--tRNA ligase (887 aa).

Residues histidine 579, histidine 583, cysteine 681, and histidine 685 each coordinate Zn(2+).

The protein belongs to the class-II aminoacyl-tRNA synthetase family. The cofactor is Zn(2+).

It is found in the cytoplasm. It carries out the reaction tRNA(Ala) + L-alanine + ATP = L-alanyl-tRNA(Ala) + AMP + diphosphate. Functionally, catalyzes the attachment of alanine to tRNA(Ala) in a two-step reaction: alanine is first activated by ATP to form Ala-AMP and then transferred to the acceptor end of tRNA(Ala). Also edits incorrectly charged Ser-tRNA(Ala) and Gly-tRNA(Ala) via its editing domain. The protein is Alanine--tRNA ligase of Flavobacterium psychrophilum (strain ATCC 49511 / DSM 21280 / CIP 103535 / JIP02/86).